Here is a 238-residue protein sequence, read N- to C-terminus: Large ribosomal subunit protein bL25 (238 aa).

Residues 1–10 (MATTVKELKA) show a composition bias toward basic and acidic residues. The interval 1-24 (MATTVKELKATARPKSGKGAARAE) is disordered.

This sequence belongs to the bacterial ribosomal protein bL25 family. CTC subfamily. Part of the 50S ribosomal subunit; part of the 5S rRNA/L5/L18/L25 subcomplex. Contacts the 5S rRNA. Binds to the 5S rRNA independently of L5 and L18.

In terms of biological role, this is one of the proteins that binds to the 5S RNA in the ribosome where it forms part of the central protuberance. The sequence is that of Large ribosomal subunit protein bL25 from Bradyrhizobium diazoefficiens (strain JCM 10833 / BCRC 13528 / IAM 13628 / NBRC 14792 / USDA 110).